The following is a 404-amino-acid chain: Cysteine desulfurase IscS (404 aa).

Pyridoxal 5'-phosphate is bound by residues 75–76, Asn-155, Gln-183, and 203–205; these read AT and SAH. N6-(pyridoxal phosphate)lysine is present on Lys-206. Thr-243 lines the pyridoxal 5'-phosphate pocket. The Cysteine persulfide intermediate role is filled by Cys-328. Residue Cys-328 participates in [2Fe-2S] cluster binding.

It belongs to the class-V pyridoxal-phosphate-dependent aminotransferase family. NifS/IscS subfamily. As to quaternary structure, homodimer. Forms a heterotetramer with IscU, probably interacts with other sulfur acceptors. Pyridoxal 5'-phosphate serves as cofactor.

It localises to the cytoplasm. It catalyses the reaction (sulfur carrier)-H + L-cysteine = (sulfur carrier)-SH + L-alanine. It participates in cofactor biosynthesis; iron-sulfur cluster biosynthesis. Its activity is regulated as follows. Inhibited by equimolar N-iodoacetyl-N'-(5-sulfo-1-naphthyl)ethylenediamine. Its function is as follows. Master enzyme that delivers sulfur to a number of partners involved in Fe-S cluster assembly, tRNA modification or cofactor biosynthesis. Catalyzes the removal of elemental sulfur from cysteine to produce alanine via an enzyme-bound persulfide intermediate. Functions as a sulfur delivery protein for Fe-S cluster synthesis. Cluster assembly on IscU homodimers proceeds sequentially from 1 2Fe-2S per dimer, to 2 2Fe-2S per dimer and finally 1 4Fe-4S per dimer. The sequence is that of Cysteine desulfurase IscS from Azotobacter vinelandii.